Here is a 161-residue protein sequence, read N- to C-terminus: Troponin C, slow skeletal and cardiac muscles (161 aa).

M1 is modified (N-acetylmethionine). 4 consecutive EF-hand domains span residues 16 to 51 (QKNEFKAAFDIFVLGAEDGCISTKELGKVMRMLGQN), 52 to 87 (PTPEELQEMIDEVDEDGSGTVDFDEFLVMMVRCMKD), 92 to 127 (KSEEELSDLFRMFDKNADGYIDLDELKIMLQATGET), and 128 to 161 (ITEDDIEELMKDGDKNNDGRIDYDEFLEFMKGVE). Residues D65, D67, S69, T71, and E76 each coordinate Ca(2+). S98 carries the post-translational modification Phosphoserine. Residues D105, N107, D109, Y111, E116, D141, N143, D145, R147, and E152 each contribute to the Ca(2+) site.

This sequence belongs to the troponin C family.

In terms of biological role, troponin is the central regulatory protein of striated muscle contraction. Tn consists of three components: Tn-I which is the inhibitor of actomyosin ATPase, Tn-T which contains the binding site for tropomyosin and Tn-C. The binding of calcium to Tn-C abolishes the inhibitory action of Tn on actin filaments. The sequence is that of Troponin C, slow skeletal and cardiac muscles (TNNC1) from Homo sapiens (Human).